The sequence spans 427 residues: Putative F-box protein At3g44060 (427 aa).

The region spanning 1–46 is the F-box domain; the sequence is MDCLPDDLLVQILYLLPTKEAVSTSVLSKRWRTLFTRSDNLDFHDP.

The protein is Putative F-box protein At3g44060 of Arabidopsis thaliana (Mouse-ear cress).